The chain runs to 288 residues: Purine nucleoside phosphorylase (288 aa).

Residue 65–66 (RN) participates in phosphate binding. A substrate-binding site is contributed by Met201. Residue Thr202 participates in phosphate binding.

It belongs to the PNP/MTAP phosphorylase family. MTAP subfamily. Homotrimer.

The protein localises to the cytoplasm. Its subcellular location is the nucleus. It carries out the reaction a purine D-ribonucleoside + phosphate = a purine nucleobase + alpha-D-ribose 1-phosphate. It participates in purine metabolism; purine nucleoside salvage. Its function is as follows. Purine nucleoside phosphorylase involved in purine salvage. This is Purine nucleoside phosphorylase from Drosophila pseudoobscura pseudoobscura (Fruit fly).